We begin with the raw amino-acid sequence, 342 residues long: tRNA N6-adenosine threonylcarbamoyltransferase (342 aa).

Residues His-115 and His-119 each contribute to the Fe cation site. Residues 138-142, Asp-171, Gly-184, and Asn-276 each bind substrate; that span reads LVSGG. Asp-304 contributes to the Fe cation binding site.

Belongs to the KAE1 / TsaD family. The cofactor is Fe(2+).

Its subcellular location is the cytoplasm. The catalysed reaction is L-threonylcarbamoyladenylate + adenosine(37) in tRNA = N(6)-L-threonylcarbamoyladenosine(37) in tRNA + AMP + H(+). Required for the formation of a threonylcarbamoyl group on adenosine at position 37 (t(6)A37) in tRNAs that read codons beginning with adenine. Is involved in the transfer of the threonylcarbamoyl moiety of threonylcarbamoyl-AMP (TC-AMP) to the N6 group of A37, together with TsaE and TsaB. TsaD likely plays a direct catalytic role in this reaction. The protein is tRNA N6-adenosine threonylcarbamoyltransferase of Dichelobacter nodosus (strain VCS1703A).